A 199-amino-acid polypeptide reads, in one-letter code: MTMDALSRLVEALRCLPGVGPKSAQRMVFHLLQHQRQRGLHLASCLEQAMKHISHCQQCNNYTEQTLCALCQNPNRDSTLLCVVESPADVSAIEQSNSFQGKYFVLMGKISPLDGLGPDDIGLPKLKELITREKIQEVILALSPSVESQTTIHFIHQLLKDETVNISQLAHGIPSGGELEFLDGNTISSALKNRAVINV.

The C4-type zinc-finger motif lies at 56 to 71 (CQQCNNYTEQTLCALC). The Toprim domain maps to 79 to 174 (TLLCVVESPA…NISQLAHGIP (96 aa)).

Belongs to the RecR family.

Functionally, may play a role in DNA repair. It seems to be involved in an RecBC-independent recombinational process of DNA repair. It may act with RecF and RecO. The sequence is that of Recombination protein RecR from Legionella pneumophila subsp. pneumophila (strain Philadelphia 1 / ATCC 33152 / DSM 7513).